Here is a 455-residue protein sequence, read N- to C-terminus: Peroxisomal membrane protein PEX3 (455 aa).

Polar residues predominate over residues 113-125; that stretch reads TVLSDDFSTSQEG. The interval 113–135 is disordered; the sequence is TVLSDDFSTSQEGAISEDTNKPP. A helical membrane pass occupies residues 155 to 171; it reads FLTLIYCESLLIVFLHL.

This sequence belongs to the peroxin-3 family. Component of the peroxisomal docking complex, composed of at least PEX3, PEX13, PEX14 and PEX17. Component of the peroxisomal translocation complex, composed of at least PEX3, PEX2, PEX10 and PEX12. Interacts with PEX19. Interacts with the pexophagy receptor ATG30.

The protein localises to the peroxisome membrane. Functionally, peroxisomal membrane protein required for peroxisome biosynthesis. Shared component of both the peroxisomal docking complex and the peroxisomal translocation complex. The two types of peroxisomal matrix targeting signals, PTS1 and PTS2, are first recognized in the cytosol by their receptors PEX5 and PEX7, respectively, which then carry the cargo to the peroxisomal membrane. The peroxisomal targeting signal (PTS) receptor-cargo complexes interact with peroxisomal membrane protein (PMP) components of the docking complex. They have then additional downstream interactions with the translocation complex, leading to the transport of fully folded and oligomerized cargo into the peroxisome matrix. PEX3 acts as an anchoring site for PEX19 on the peroxisomal membrane and thus plays a crucial role in the assembly of the peroxisomal translocation complex. Is also essential for the interaction between the two complexes. Finally. PEX3 activates selective autophagy of peroxisomes (pexophagy) via interaction with the pexophagy receptor ATG30. This is Peroxisomal membrane protein PEX3 from Komagataella pastoris (Yeast).